Consider the following 223-residue polypeptide: Ras-related protein Rab-37 (223 aa).

The tract at residues 1 to 23 (MTGTPGAVATRDGEAPERSPPCS) is disordered. An N-acetylthreonine modification is found at T2. Residues T38, G39, V40, G41, K42, T43, C44, and T62 each contribute to the GTP site. T43 serves as a coordination point for Mg(2+). Short sequence motifs (switch) lie at residues 52–67 (GAFLSGTFIATVGIDF) and 85–102 (DTAGQERFRSVTHAYYRD). T62 and D85 together coordinate Mg(2+). Residues G88, N143, K144, D146, M147, S173, A174, and K175 each contribute to the GTP site. 2 S-geranylgeranyl cysteine lipidation sites follow: C219 and C220. C220 bears the Cysteine methyl ester mark. Positions 221–223 (SFM) are cleaved as a propeptide — removed in mature form.

It belongs to the small GTPase superfamily. Rab family. As to quaternary structure, interacts with RIMS1. Interacts (in GDP-bound form) with RPGR, RPGR functions as guanine exchange factor (GEF). It depends on Mg(2+) as a cofactor.

Its subcellular location is the cytoplasmic vesicle. It is found in the cell projection. It localises to the cilium. It catalyses the reaction GTP + H2O = GDP + phosphate + H(+). Regulated by guanine nucleotide exchange factors (GEFs) including RPGR which promote the exchange of bound GDP for free GTP. Regulated by GTPase activating proteins (GAPs) which increase the GTP hydrolysis activity. Inhibited by GDP dissociation inhibitors (GDIs). Functionally, the small GTPases Rab are key regulators of intracellular membrane trafficking, from the formation of transport vesicles to their fusion with membranes. Rabs cycle between an inactive GDP-bound form and an active GTP-bound form that is able to recruit to membranes different sets of downstream effectors directly responsible for vesicle formation, movement, tethering and fusion. Acts as an organizer for autophagosome biogenesis in a GTP-dependent manner. Involved in retinal homeostasis by autophagy regulation. This Homo sapiens (Human) protein is Ras-related protein Rab-37.